The following is a 505-amino-acid chain: 2,3-bisphosphoglycerate-independent phosphoglycerate mutase (505 aa).

The Mn(2+) site is built by D12 and S62. Residue S62 is the Phosphoserine intermediate of the active site. Substrate is bound by residues H123, 153–154 (RD), R185, R191, 257–260 (RPDR), and K330. Positions 397, 401, 438, 439, and 456 each coordinate Mn(2+).

The protein belongs to the BPG-independent phosphoglycerate mutase family. Monomer. The cofactor is Mn(2+).

The enzyme catalyses (2R)-2-phosphoglycerate = (2R)-3-phosphoglycerate. It participates in carbohydrate degradation; glycolysis; pyruvate from D-glyceraldehyde 3-phosphate: step 3/5. Catalyzes the interconversion of 2-phosphoglycerate and 3-phosphoglycerate. This chain is 2,3-bisphosphoglycerate-independent phosphoglycerate mutase, found in Staphylococcus aureus (strain Mu50 / ATCC 700699).